A 113-amino-acid polypeptide reads, in one-letter code: Hydrogenase maturation factor HypA (113 aa).

His-2 is a Ni(2+) binding site. Cys-73, Cys-76, Cys-89, and Cys-92 together coordinate Zn(2+).

It belongs to the HypA/HybF family.

Its function is as follows. Involved in the maturation of [NiFe] hydrogenases. Required for nickel insertion into the metal center of the hydrogenase. The chain is Hydrogenase maturation factor HypA from Methylocella silvestris (strain DSM 15510 / CIP 108128 / LMG 27833 / NCIMB 13906 / BL2).